We begin with the raw amino-acid sequence, 225 residues long: Protein-L-isoaspartate O-methyltransferase (225 aa).

Ser63 is a catalytic residue.

It belongs to the methyltransferase superfamily. L-isoaspartyl/D-aspartyl protein methyltransferase family.

It is found in the cytoplasm. The catalysed reaction is [protein]-L-isoaspartate + S-adenosyl-L-methionine = [protein]-L-isoaspartate alpha-methyl ester + S-adenosyl-L-homocysteine. Functionally, catalyzes the methyl esterification of L-isoaspartyl residues in peptides and proteins that result from spontaneous decomposition of normal L-aspartyl and L-asparaginyl residues. It plays a role in the repair and/or degradation of damaged proteins. The sequence is that of Protein-L-isoaspartate O-methyltransferase from Staphylothermus marinus (strain ATCC 43588 / DSM 3639 / JCM 9404 / F1).